Reading from the N-terminus, the 233-residue chain is Ribonuclease HII (233 aa).

Residues 21 to 211 enclose the RNase H type-2 domain; that stretch reads KVIAGVDEVG…LDALPQWRHL (191 aa). Residues D27, E28, and D119 each coordinate a divalent metal cation.

The protein belongs to the RNase HII family. Mn(2+) serves as cofactor. Requires Mg(2+) as cofactor.

It is found in the cytoplasm. The catalysed reaction is Endonucleolytic cleavage to 5'-phosphomonoester.. Functionally, endonuclease that specifically degrades the RNA of RNA-DNA hybrids. This chain is Ribonuclease HII, found in Streptomyces avermitilis (strain ATCC 31267 / DSM 46492 / JCM 5070 / NBRC 14893 / NCIMB 12804 / NRRL 8165 / MA-4680).